A 130-amino-acid chain; its full sequence is HTH-type transcriptional regulator KmtR (130 aa).

Residues 10 to 104 enclose the HTH arsR-type domain; that stretch reads LPDDQVCLVV…DAVFNAEHAG (95 aa). Positions 44–67 form a DNA-binding region, H-T-H motif; it reads VNELAEQVGKPAPSVSQHLAKLRM. The tract at residues 110 to 130 is disordered; that stretch reads HHRAAGGLQSVAKASATKDVG.

Its activity is regulated as follows. Binding to DNA is inhibited by nickel and cobalt ions. In terms of biological role, represses expression of Rv2025c and its own expression. Acts by binding to the promoter regions. In Mycobacterium tuberculosis (strain ATCC 25618 / H37Rv), this protein is HTH-type transcriptional regulator KmtR (kmtR).